The following is a 71-amino-acid chain: DNA-directed RNA polymerase subunit Rpo10 (71 aa).

4 residues coordinate Zn(2+): Cys-6, Cys-9, Cys-52, and Cys-53.

Belongs to the archaeal Rpo10/eukaryotic RPB10 RNA polymerase subunit family. As to quaternary structure, part of the RNA polymerase complex. Zn(2+) serves as cofactor.

It is found in the cytoplasm. It catalyses the reaction RNA(n) + a ribonucleoside 5'-triphosphate = RNA(n+1) + diphosphate. Functionally, DNA-dependent RNA polymerase (RNAP) catalyzes the transcription of DNA into RNA using the four ribonucleoside triphosphates as substrates. This is DNA-directed RNA polymerase subunit Rpo10 from Methanocella arvoryzae (strain DSM 22066 / NBRC 105507 / MRE50).